Consider the following 391-residue polypeptide: uncharacterized protein (391 aa).

2 WD repeats span residues 137–179 (VNDI…PILA) and 182–222 (PLSS…SAEE).

It is found in the cytoplasm. Its subcellular location is the nucleus. This is an uncharacterized protein from Schizosaccharomyces pombe (strain 972 / ATCC 24843) (Fission yeast).